Here is a 292-residue protein sequence, read N- to C-terminus: Bifunctional protein FolD 2 (292 aa).

NADP(+) contacts are provided by residues Gly166 to Ser168 and Ile232.

It belongs to the tetrahydrofolate dehydrogenase/cyclohydrolase family. Homodimer.

The catalysed reaction is (6R)-5,10-methylene-5,6,7,8-tetrahydrofolate + NADP(+) = (6R)-5,10-methenyltetrahydrofolate + NADPH. It carries out the reaction (6R)-5,10-methenyltetrahydrofolate + H2O = (6R)-10-formyltetrahydrofolate + H(+). It participates in one-carbon metabolism; tetrahydrofolate interconversion. Its function is as follows. Catalyzes the oxidation of 5,10-methylenetetrahydrofolate to 5,10-methenyltetrahydrofolate and then the hydrolysis of 5,10-methenyltetrahydrofolate to 10-formyltetrahydrofolate. The protein is Bifunctional protein FolD 2 of Ruegeria pomeroyi (strain ATCC 700808 / DSM 15171 / DSS-3) (Silicibacter pomeroyi).